The chain runs to 720 residues: DNA replication licensing factor mcm7 (720 aa).

The segment at 183 to 210 adopts a C4-type zinc-finger fold; sequence CDQCGAETYQPIQSPTFMPLIMCPSREC. Residues 331 to 537 enclose the MCM domain; the sequence is FYEKLAASIA…NDLRLAQHIT (207 aa). Residues Tyr344, Gly383, Ala385, Lys386, Ser387, Asn488, Arg513, and Arg603 each coordinate ATP. Positions 512–515 match the Arginine finger motif; it reads SRFD.

It belongs to the MCM family. In terms of assembly, component of the mcm2-7 complex (RLF-M). The complex forms a toroidal hexameric ring with the proposed subunit order mcm2-mcm6-mcm4-mcm7-mcm3-mcm5. The heterodimer of mmcm3/mcm5 interacts with mcm4, mmcm6, mcm7 and weakly with mcm2. The N-terminus is required for interaction with mmcm3, though this interaction may not be direct, and remains in a complex with mmcm3 throughout the cell cycle. Begins to associate with zmcm6 at the neurula stage. Component of the replisome complex. Component of the CMG helicase complex, composed of the mcm2-7 complex, the GINS complex and cdc45. In terms of processing, ubiquitinated by traip when forks converge following formation of DNA interstrand cross-links. Short ubiquitin chains on mcm7 promote recruitment of DNA glycosylase neil3. If the interstrand cross-link cannot be cleaved by neil3, the ubiquitin chains continue to grow on mcm7, promoting the unloading of the CMG helicase complex by the vcp/p97 ATPase.

It localises to the nucleus. The protein localises to the chromosome. It catalyses the reaction ATP + H2O = ADP + phosphate + H(+). Its function is as follows. Acts as a component of the mcm2-7 complex (mcm complex) which is the putative replicative helicase essential for 'once per cell cycle' DNA replication initiation and elongation in eukaryotic cells. The active ATPase sites in the mcm2-7 ring are formed through the interaction surfaces of two neighboring subunits such that a critical structure of a conserved arginine finger motif is provided in trans relative to the ATP-binding site of the Walker A box of the adjacent subunit. The six ATPase active sites, however, are likely to contribute differentially to the complex helicase activity. The existence of maternal and zygotic forms of mcm3 and mcm6 suggests that specific forms of mcm2-7 complexes may be used during different stages of development. This Xenopus tropicalis (Western clawed frog) protein is DNA replication licensing factor mcm7.